Consider the following 183-residue polypeptide: Large ribosomal subunit protein uL22 (183 aa).

The protein belongs to the universal ribosomal protein uL22 family.

The protein is Large ribosomal subunit protein uL22 (RPL17) of Podocoryna carnea (Hydrozoan).